Reading from the N-terminus, the 29-residue chain is Glucagon (29 aa).

S2 is subject to Phosphoserine.

The protein belongs to the glucagon family.

It is found in the secreted. Functionally, glucagon plays a key role in glucose metabolism and homeostasis. Regulates blood glucose by increasing gluconeogenesis and decreasing glycolysis. The polypeptide is Glucagon (GCG) (Oryctolagus cuniculus (Rabbit)).